The sequence spans 396 residues: Lipid-A-disaccharide synthase (396 aa).

This sequence belongs to the LpxB family.

The enzyme catalyses a lipid X + a UDP-2-N,3-O-bis[(3R)-3-hydroxyacyl]-alpha-D-glucosamine = a lipid A disaccharide + UDP + H(+). It functions in the pathway bacterial outer membrane biogenesis; LPS lipid A biosynthesis. Functionally, condensation of UDP-2,3-diacylglucosamine and 2,3-diacylglucosamine-1-phosphate to form lipid A disaccharide, a precursor of lipid A, a phosphorylated glycolipid that anchors the lipopolysaccharide to the outer membrane of the cell. The chain is Lipid-A-disaccharide synthase from Nitrobacter winogradskyi (strain ATCC 25391 / DSM 10237 / CIP 104748 / NCIMB 11846 / Nb-255).